We begin with the raw amino-acid sequence, 152 residues long: SsrA-binding protein (152 aa).

This sequence belongs to the SmpB family.

It is found in the cytoplasm. Required for rescue of stalled ribosomes mediated by trans-translation. Binds to transfer-messenger RNA (tmRNA), required for stable association of tmRNA with ribosomes. tmRNA and SmpB together mimic tRNA shape, replacing the anticodon stem-loop with SmpB. tmRNA is encoded by the ssrA gene; the 2 termini fold to resemble tRNA(Ala) and it encodes a 'tag peptide', a short internal open reading frame. During trans-translation Ala-aminoacylated tmRNA acts like a tRNA, entering the A-site of stalled ribosomes, displacing the stalled mRNA. The ribosome then switches to translate the ORF on the tmRNA; the nascent peptide is terminated with the 'tag peptide' encoded by the tmRNA and targeted for degradation. The ribosome is freed to recommence translation, which seems to be the essential function of trans-translation. The sequence is that of SsrA-binding protein from Helicobacter pylori (strain J99 / ATCC 700824) (Campylobacter pylori J99).